We begin with the raw amino-acid sequence, 175 residues long: Peptide methionine sulfoxide reductase MsrA (175 aa).

Cysteine 12 is a catalytic residue.

It belongs to the MsrA Met sulfoxide reductase family.

It carries out the reaction L-methionyl-[protein] + [thioredoxin]-disulfide + H2O = L-methionyl-(S)-S-oxide-[protein] + [thioredoxin]-dithiol. The catalysed reaction is [thioredoxin]-disulfide + L-methionine + H2O = L-methionine (S)-S-oxide + [thioredoxin]-dithiol. Functionally, has an important function as a repair enzyme for proteins that have been inactivated by oxidation. Catalyzes the reversible oxidation-reduction of methionine sulfoxide in proteins to methionine. The chain is Peptide methionine sulfoxide reductase MsrA from Limosilactobacillus reuteri (strain DSM 20016) (Lactobacillus reuteri).